A 69-amino-acid chain; its full sequence is Large ribosomal subunit protein bL31 (69 aa).

Residues Cys-17, Cys-19, Cys-37, and Cys-40 each coordinate Zn(2+).

This sequence belongs to the bacterial ribosomal protein bL31 family. Type A subfamily. As to quaternary structure, part of the 50S ribosomal subunit. Zn(2+) serves as cofactor.

Binds the 23S rRNA. The chain is Large ribosomal subunit protein bL31 from Caldicellulosiruptor bescii (strain ATCC BAA-1888 / DSM 6725 / KCTC 15123 / Z-1320) (Anaerocellum thermophilum).